A 257-amino-acid polypeptide reads, in one-letter code: MRFDVVTLFPDMFGLVRDQGVTGRAHAQGLWALHAWNPRDFTHDVHRTVDDRPYGGGPGMVMMAAPLEAAVAAAQAARAAQGLQAAPVILLSPAGRRYDQAEATTLAAGTGAIFICGRYEGVDQRFIERCVTHELSLGDFVLSGGELAALAMMDAAVRLLPGVLNDGDSALQDSFNAALDGLLDSPHYTRPEVYEGVPVPQPLLSGHHANIARWRREQSLRLTASRRPELIERARGEGRLSKADERFLASLAGERES.

S-adenosyl-L-methionine is bound by residues Gly-117 and 137 to 142 (LGDFVL).

This sequence belongs to the RNA methyltransferase TrmD family. Homodimer.

The protein localises to the cytoplasm. The enzyme catalyses guanosine(37) in tRNA + S-adenosyl-L-methionine = N(1)-methylguanosine(37) in tRNA + S-adenosyl-L-homocysteine + H(+). Specifically methylates guanosine-37 in various tRNAs. This Bordetella pertussis (strain Tohama I / ATCC BAA-589 / NCTC 13251) protein is tRNA (guanine-N(1)-)-methyltransferase.